We begin with the raw amino-acid sequence, 62 residues long: MTIAFQLAVFALIAISFLLVIGVPVVLASPEGWSSNKNVVFSGASLWIGLVFLVGILNSFIS.

2 consecutive transmembrane segments (helical) span residues alanine 8–alanine 28 and phenylalanine 41–isoleucine 61.

The protein belongs to the PsbZ family. In terms of assembly, PSII is composed of 1 copy each of membrane proteins PsbA, PsbB, PsbC, PsbD, PsbE, PsbF, PsbH, PsbI, PsbJ, PsbK, PsbL, PsbM, PsbT, PsbY, PsbZ, Psb30/Ycf12, at least 3 peripheral proteins of the oxygen-evolving complex and a large number of cofactors. It forms dimeric complexes.

The protein localises to the plastid. It localises to the chloroplast thylakoid membrane. Functionally, may control the interaction of photosystem II (PSII) cores with the light-harvesting antenna, regulates electron flow through the 2 photosystem reaction centers. PSII is a light-driven water plastoquinone oxidoreductase, using light energy to abstract electrons from H(2)O, generating a proton gradient subsequently used for ATP formation. This chain is Photosystem II reaction center protein Z, found in Marchantia polymorpha (Common liverwort).